A 367-amino-acid polypeptide reads, in one-letter code: Porin Omp2a (367 aa).

Residues 1–22 (MNIKSLLLGSAAALVAASGAQA) form the signal peptide.

This sequence belongs to the alphaproteobacteria porin family. As to quaternary structure, monomer.

Its subcellular location is the cell outer membrane. Functionally, forms passive diffusion pores that allow small molecular weight hydrophilic materials across the outer membrane. In Brucella suis, this protein is Porin Omp2a (omp2a).